A 378-amino-acid chain; its full sequence is Ferredoxin--NADP reductase, embryo isozyme, chloroplastic (378 aa).

The transit peptide at 1-62 (MASALGAQAS…SRHMNKIFSM (62 aa)) directs the protein to the chloroplast. One can recognise an FAD-binding FR-type domain in the interval 93 to 221 (KEPYTATIVS…TGPSGKIMLL (129 aa)). FAD is bound by residues 153 to 156 (RLYS), 174 to 176 (CVR), Tyr-180, 195 to 197 (ICS), and Thr-237. NADP(+) is bound by residues Ser-156 and Arg-176. NADP(+)-binding positions include Thr-237, 269 to 270 (VA), 299 to 300 (SR), Lys-309, 337 to 338 (GL), and Glu-376.

This sequence belongs to the ferredoxin--NADP reductase type 1 family. It depends on FAD as a cofactor.

It is found in the plastid. It localises to the chloroplast. It carries out the reaction 2 reduced [2Fe-2S]-[ferredoxin] + NADP(+) + H(+) = 2 oxidized [2Fe-2S]-[ferredoxin] + NADPH. It functions in the pathway energy metabolism; photosynthesis. In terms of biological role, may play a key role in regulating the relative amounts of cyclic and non-cyclic electron flow to meet the demands of the plant for ATP and reducing power. Is involved in nitrate assimilation. This Oryza sativa subsp. japonica (Rice) protein is Ferredoxin--NADP reductase, embryo isozyme, chloroplastic.